Consider the following 99-residue polypeptide: Small ribosomal subunit protein bS18 (99 aa).

Residues 1–25 are disordered; it reads MAESKGRPGSASQRPTGGDKAIAGQ.

Belongs to the bacterial ribosomal protein bS18 family. Part of the 30S ribosomal subunit. Forms a tight heterodimer with protein bS6.

Functionally, binds as a heterodimer with protein bS6 to the central domain of the 16S rRNA, where it helps stabilize the platform of the 30S subunit. This chain is Small ribosomal subunit protein bS18, found in Solibacter usitatus (strain Ellin6076).